A 126-amino-acid chain; its full sequence is Holo-[acyl-carrier-protein] synthase (126 aa).

Mg(2+) is bound by residues Asp-9 and Glu-58.

It belongs to the P-Pant transferase superfamily. AcpS family. Requires Mg(2+) as cofactor.

The protein resides in the cytoplasm. It catalyses the reaction apo-[ACP] + CoA = holo-[ACP] + adenosine 3',5'-bisphosphate + H(+). Its function is as follows. Transfers the 4'-phosphopantetheine moiety from coenzyme A to a Ser of acyl-carrier-protein. The polypeptide is Holo-[acyl-carrier-protein] synthase (Yersinia pestis bv. Antiqua (strain Angola)).